Reading from the N-terminus, the 143-residue chain is Nucleoside diphosphate kinase (143 aa).

Residues Lys11, Phe59, Arg87, Thr93, Arg104, and Asn114 each contribute to the ATP site. His117 acts as the Pros-phosphohistidine intermediate in catalysis.

It belongs to the NDK family. Homotetramer. Requires Mg(2+) as cofactor.

Its subcellular location is the cytoplasm. The catalysed reaction is a 2'-deoxyribonucleoside 5'-diphosphate + ATP = a 2'-deoxyribonucleoside 5'-triphosphate + ADP. The enzyme catalyses a ribonucleoside 5'-diphosphate + ATP = a ribonucleoside 5'-triphosphate + ADP. In terms of biological role, major role in the synthesis of nucleoside triphosphates other than ATP. The ATP gamma phosphate is transferred to the NDP beta phosphate via a ping-pong mechanism, using a phosphorylated active-site intermediate. The chain is Nucleoside diphosphate kinase from Shewanella loihica (strain ATCC BAA-1088 / PV-4).